Consider the following 314-residue polypeptide: Malate dehydrogenase (314 aa).

Residues 11 to 16 and Asp35 contribute to the NAD(+) site; that span reads GSGNIG. Substrate contacts are provided by Arg84 and Arg90. NAD(+) contacts are provided by residues Asn97 and 120-122; that span reads ITN. The substrate site is built by Asn122 and Arg153. His177 (proton acceptor) is an active-site residue.

It belongs to the LDH/MDH superfamily. MDH type 3 family.

It carries out the reaction (S)-malate + NAD(+) = oxaloacetate + NADH + H(+). Functionally, catalyzes the reversible oxidation of malate to oxaloacetate. The protein is Malate dehydrogenase of Rickettsia typhi (strain ATCC VR-144 / Wilmington).